The sequence spans 638 residues: RNA exonuclease 3 (638 aa).

A disordered region spans residues 37–136; that stretch reads AQDQVLEQKE…PPRRAPKEAL (100 aa). The segment covering 55–76 has biased composition (basic and acidic residues); that stretch reads LKLEPRPEAKETPKDDLRHVSD. Over residues 77 to 111 the composition is skewed to polar residues; the sequence is SGRSTPVKKTTAPATNAENISPVSRQPNIPKNTAT. One can recognise an Exonuclease domain in the interval 408 to 584; that stretch reads ICFDCEMGYT…VEDALATGDL (177 aa). Over residues 612–622 the composition is skewed to polar residues; that stretch reads DSSSNTVSMQT. The segment at 612–638 is disordered; it reads DSSSNTVSMQTKLGEGAGAKRAREGTS.

Belongs to the REXO1/REXO3 family.

The protein localises to the cytoplasm. The protein resides in the nucleus. In terms of biological role, 3' to 5' exoribonuclease required for proper 3' end maturation of MRP RNA and of the U5L snRNA. This chain is RNA exonuclease 3 (rex3), found in Emericella nidulans (strain FGSC A4 / ATCC 38163 / CBS 112.46 / NRRL 194 / M139) (Aspergillus nidulans).